The primary structure comprises 428 residues: Endoplasmic reticulum junction formation protein lunapark (428 aa).

The N-myristoyl glycine moiety is linked to residue Gly-2. Over 2–45 (GGLFSRWRTKPSTVEVLESIDKEIQALEEFREKNQRLQKLWVGR) the chain is Cytoplasmic. Residues 16 to 41 (EVLESIDKEIQALEEFREKNQRLQKL) adopt a coiled-coil conformation. Residues 46 to 66 (LILYSSVLYLFTCLIVYLWYL) traverse the membrane as a helical segment. The Lumenal segment spans residues 67 to 77 (PDEFTARLAMT). A helical membrane pass occupies residues 78-98 (LPFFAFPLIIWSIRTVIIFFF). Residues 99–428 (SKRTERNNEA…ELSGESLTAE (330 aa)) lie on the Cytoplasmic side of the membrane. Positions 102–128 (TERNNEALDDLKSQRKKILEEVMEKET) form a coiled coil. A phosphoserine mark is found at Ser-114, Ser-153, Ser-177, Ser-182, and Ser-194. The disordered stretch occupies residues 143 to 247 (SKKAKECEPP…HPPGPPLARP (105 aa)). Residues 185–198 (QGPPPQVPVSPGPP) are compositionally biased toward pro residues. A phosphothreonine mark is found at Thr-211 and Thr-213. 2 positions are modified to phosphoserine: Ser-217 and Ser-227. Residues 276–301 (CQQCFSHNGMALKEEFEYIAFRCAYC) form a C4-type; plays a role in ER morphology zinc finger. 3 positions are modified to phosphoserine: Ser-321, Ser-353, and Ser-384. The interval 356–428 (HDVLDDNTEQ…ELSGESLTAE (73 aa)) is disordered. Residues 386–401 (SEEPEEKQETENEEAS) show a composition bias toward acidic residues. A Phosphoserine modification is found at Ser-414.

It belongs to the lunapark family. Homodimer; homodimerization requires the C4-type zinc finger motif and decreases during mitosis in a phosphorylation-dependent manner. In terms of processing, myristoylated; myristoylation is necessary for the endoplasmic reticulum (ER) three-way ER tubular junction formation, but is not required neither for membrane translocation, membrane topology formation, nor for the specific localization to ER membranes. Phosphorylated. Phosphorylation occurs at Ser-177, Ser-182, Ser-217, Ser-227, Ser-321 and Ser-384 during interphase. Phosphorylation occurs at Ser-114, Ser-153, Ser-194, Thr-211 and Ser-353 during mitosis; these phosphorylations reduce both its homodimerization and the ER three-way tubular junction formation. Post-translationally, subject to proteasomal degradation following phosphorylation during mitosis. As to expression, expressed in neural precursor cells, where it is detected at the growth-cone-like structure and branching sites of neurite-like processes.

It localises to the endoplasmic reticulum membrane. Its function is as follows. Endoplasmic reticulum (ER)-shaping membrane protein that plays a role in determining ER morphology. Involved in the stabilization of nascent three-way ER tubular junctions within the ER network. May also play a role as a curvature-stabilizing protein within the three-way ER tubular junction network. May be involved in limb development. Is involved in central nervous system development. This is Endoplasmic reticulum junction formation protein lunapark from Homo sapiens (Human).